The chain runs to 401 residues: Putative hetero-Diels-Alderase asR5 (401 aa).

The first 21 residues, 1–21 (MRRSFLISAALGLSMSTPALA), serve as a signal peptide directing secretion. N-linked (GlcNAc...) asparagine glycosylation is found at N71, N77, N240, and N334.

This sequence belongs to the eupF Diels-Alderase family.

The protein operates within secondary metabolite biosynthesis; terpenoid biosynthesis. Putative hetero-Diels-Alderase; part of the gene cluster that mediates the biosynthesis of xenovulene A, an unusual meroterpenoid that has potent inhibitory effects on the human gamma-aminobutyrate A (GABAA) benzodiazepine receptor. The first step of xenovulene A biosynthesis is the biosynthesis of 3-methylorcinaldehyde performed by the non-reducing polyketide synthase aspks1. The salicylate hydroxylase asL1 then catalyzes the oxidative dearomatization of 3-methylorcinaldehyde to yield a dearomatized hydroxycyclohexadione. The 2-oxoglutarate-dependent dioxygenase asL3 further catalyzes the oxidative ring expansion to provide the first tropolone metabolite. The cytochrome P450 monooxygenase asR2 allows the synthesis of tropolone hemiacetal. In parallel, a previously unrecognised class of terpene cyclase, asR6, produces alpha-humulene from farnesylpyrophosphate (FPP). The putative Diels-Alderase asR5 probably catalyzes the formation of the tropolone-humulene skeleton by linking humulene and the polyketide moiety. Oxidative-ring contractions catalyzed by asL4 and asL6 then processively remove carbon atoms from the polyketide to yield xenovulene A. The chain is Putative hetero-Diels-Alderase asR5 from Sarocladium schorii (Acremonium strictum (strain IMI 501407)).